Here is a 486-residue protein sequence, read N- to C-terminus: Hematopoietic lineage cell-specific protein (486 aa).

The tract at residues 27-66 (FVNDISEKEQRWGAKTIEGSGRTEHINIHQLRNKVSEEHD) is involved in HAX-1 binding. At Lys41 the chain carries N6-acetyllysine. 3 Cortactin repeats span residues 79–115 (ASHG…SQTD), 116–152 (AAKG…SQKD), and 153–189 (YSRG…SQRD). Lys123 is modified (N6-acetyllysine). Position 140 is a phosphotyrosine (Tyr140). A Cortactin 4; truncated repeat occupies 190-212 (YAKGFGGQYGIQKDRVDKSAVGF). Lys192 is subject to N6-acetyllysine. At Tyr198 the chain carries Phosphotyrosine. Phosphotyrosine; by FGR is present on Tyr222. Lys241 bears the N6-acetyllysine mark. Basic and acidic residues predominate over residues 243-276 (ESMAEEKRKREEEEKAQQVARRQQERKAVTKRSP). The tract at residues 243–419 (ESMAEEKRKR…SALAGSSGCP (177 aa)) is disordered. Position 275 is a phosphoserine (Ser275). Position 308 is a phosphothreonine (Thr308). Residues 315-324 (EPVRTSREHP) are compositionally biased toward basic and acidic residues. Composition is skewed to acidic residues over residues 353–383 (QVEE…DVEE) and 390–405 (EDEP…EPED). Residues Tyr378 and Tyr397 each carry the phosphotyrosine; by SYK and FES modification. A compositionally biased stretch (low complexity) spans 406–419 (SSFSSALAGSSGCP). The SH3 domain maps to 428-486 (ALGISAVAVYDYQGEGSDELSFDPDDVITDIEMVDEGWWRGRCHGHFGLFPANYVKLLE).

As to quaternary structure, associates with the SH2 and SH3 domains of LCK. Binding to he LCK SH3 domain occurs constitutively, while binding to the LCK SH2 domain occurs only upon TCR stimulation. A similar binding pattern was observed with LYN, but not with FYN in which the FYN SH2 region associates upon TCR stimulation but the FYN SH3 region does not associate regardless of TCR stimulation. Directly associates with HAX1, through binding to its C-terminal region. Interacts with HS1BP3. Interacts with FES/FPS. Interacts (via SH2 domain) with FGR. Forms a multiprotein complex with LYN and ANKRD54. In terms of processing, phosphorylated by FES. Phosphorylated by LYN, FYN and FGR after cross-linking of surface IgM on B-cells. Phosphorylation by LYN, FYN and FGR requires prior phosphorylation by SYK or FES. In terms of tissue distribution, expressed only in tissues and cells of hematopoietic origin.

Its subcellular location is the membrane. The protein localises to the cytoplasm. It is found in the mitochondrion. Substrate of the antigen receptor-coupled tyrosine kinase. Plays a role in antigen receptor signaling for both clonal expansion and deletion in lymphoid cells. May also be involved in the regulation of gene expression. The chain is Hematopoietic lineage cell-specific protein (HCLS1) from Homo sapiens (Human).